The primary structure comprises 470 residues: Protein escargot (470 aa).

Residues 271-309 (LNLNTSQPGEQAAAKTGDMSPETMPNASAKKDKNQPPRY) form a disordered region. 4 C2H2-type zinc fingers span residues 309–331 (YQCPDCQKSYSTFSGLTKHQQFH), 344–366 (FSCKDCDKTYVSLGALKMHIRTH), 370–392 (CKCNLCGKAFSRPWLLQGHIRTH), and 398–420 (FSCQHCHRAFADRSNLRAHLQTH). The C2H2-type 5; atypical zinc-finger motif lies at 426 to 449 (YSCTSCSKTFSRMSLLTKHSEGGC). The tract at residues 448–470 (GCPGGSAGSSSSSELNYAGYAEP) is disordered.

The protein belongs to the snail C2H2-type zinc-finger protein family. Expression is complex and dynamic. In early embryogenesis, expression begins on the dorsal side of the embryo. Expressed in a pattern of longitudinal stripes early in germband elongation. Later in embryogenesis, expression is in cells that correspond to the wing, haltere, leg and genital imaginal disks and the abdominal histoblasts. In the embryonic leg disk, expression is restricted to imaginal cells. Also expressed in the central nervous system (CNS), tracheae and head of stage 14 embryos. CNS and tracheal expression decays during later stages, though head expression persists until late in embryogenesis. In third instar larvae, expression is seen in the brain and in regions of many imaginal tissues including the eye-antennal, wing, leg and haltere disks. Expressed in embryonic, larval and adult male germline stem cells and in the somatic cells of the embryonic gonads.

It is found in the nucleus. In terms of biological role, transcription factor that can both stimulate and repress transcription. Binds to the consensus DNA sequence 5'-A/GCAGGTG-3'. Regulates cell motility and adhesion during tracheal morphogenesis by stimulating transcription of the DE-cadherin gene shg at branch tips, thereby promoting tracheal tube fusion. Maintains diploidy in imaginal cells by inhibiting the transcription of genes required for endoreplication. Required for development of the genital disk and acts as an intrinsic determinant of wing cell fate. The somatic protein is required for maintenance of male germ cells. Acts with other members of the snail protein family to control embryonic central nervous system development. The polypeptide is Protein escargot (esg) (Drosophila melanogaster (Fruit fly)).